The following is a 1316-amino-acid chain: DNA-directed RNA polymerase subunit beta' (1316 aa).

Positions 60, 62, 75, and 78 each coordinate Zn(2+). Mg(2+)-binding residues include aspartate 535, aspartate 537, and aspartate 539. Cysteine 891, cysteine 968, cysteine 975, and cysteine 978 together coordinate Zn(2+).

It belongs to the RNA polymerase beta' chain family. In terms of assembly, the RNAP catalytic core consists of 2 alpha, 1 beta, 1 beta' and 1 omega subunit. When a sigma factor is associated with the core the holoenzyme is formed, which can initiate transcription. The cofactor is Mg(2+). It depends on Zn(2+) as a cofactor.

It carries out the reaction RNA(n) + a ribonucleoside 5'-triphosphate = RNA(n+1) + diphosphate. DNA-dependent RNA polymerase catalyzes the transcription of DNA into RNA using the four ribonucleoside triphosphates as substrates. This is DNA-directed RNA polymerase subunit beta' from Mycobacterium bovis (strain BCG / Tokyo 172 / ATCC 35737 / TMC 1019).